Consider the following 359-residue polypeptide: Protein Wnt-9b (359 aa).

The first 23 residues, 1–23 (MRPAPALALAALCLLVLPAAAAA), serve as a signal peptide directing secretion. Cystine bridges form between Cys-91/Cys-102, Cys-137/Cys-145, Cys-147/Cys-164, Cys-212/Cys-226, Cys-214/Cys-221, Cys-293/Cys-318, Cys-307/Cys-313, Cys-317/Cys-357, Cys-333/Cys-348, Cys-335/Cys-345, and Cys-340/Cys-341. Asn-101 is a glycosylation site (N-linked (GlcNAc...) asparagine). A lipid anchor (O-palmitoleoyl serine; by PORCN) is attached at Ser-218.

Belongs to the Wnt family. Forms a soluble 1:1 complex with AFM; this prevents oligomerization and is required for prolonged biological activity. The complex with AFM may represent the physiological form in body fluids. Component of the Wnt-Fzd-LRP5-LRP6 signaling complex that contains a WNT protein, a FZD protein and LRP5 or LRP6. Interacts directly in the complex with LRP6. Interacts with PKD1 (via extracellular domain). In terms of processing, palmitoleoylation is required for efficient binding to frizzled receptors. Depalmitoleoylation leads to Wnt signaling pathway inhibition.

Its subcellular location is the secreted. It localises to the extracellular space. It is found in the extracellular matrix. In terms of biological role, ligand for members of the frizzled family of seven transmembrane receptors. Functions in the canonical Wnt/beta-catenin signaling pathway. Required for normal embryonic kidney development, and for normal development of the urogenital tract, including uterus and part of the oviduct and the upper vagina in females, and epididymis and vas deferens in males. Activates a signaling cascade in the metanephric mesenchyme that induces tubulogenesis. Acts upstream of WNT4 in the signaling pathways that mediate development of kidney tubules and the Muellerian ducts. Plays a role in cranofacial development and is required for normal fusion of the palate during embryonic development. The polypeptide is Protein Wnt-9b (Wnt9b) (Mus musculus (Mouse)).